The sequence spans 384 residues: NADH-quinone oxidoreductase subunit D 2 (384 aa).

The protein belongs to the complex I 49 kDa subunit family. NDH-1 is composed of 14 different subunits. Subunits NuoB, C, D, E, F, and G constitute the peripheral sector of the complex.

It localises to the cell membrane. It catalyses the reaction a quinone + NADH + 5 H(+)(in) = a quinol + NAD(+) + 4 H(+)(out). In terms of biological role, NDH-1 shuttles electrons from NADH, via FMN and iron-sulfur (Fe-S) centers, to quinones in the respiratory chain. The immediate electron acceptor for the enzyme in this species is believed to be a menaquinone. Couples the redox reaction to proton translocation (for every two electrons transferred, four hydrogen ions are translocated across the cytoplasmic membrane), and thus conserves the redox energy in a proton gradient. This Symbiobacterium thermophilum (strain DSM 24528 / JCM 14929 / IAM 14863 / T) protein is NADH-quinone oxidoreductase subunit D 2.